Consider the following 235-residue polypeptide: Octanoyltransferase (235 aa).

The BPL/LPL catalytic domain occupies 28–203 (GRAEETLLLL…PFAGLPADAL (176 aa)). Substrate contacts are provided by residues 66 to 73 (RGGDVTWH), 133 to 135 (SIG), and 146 to 148 (GFA). Cys164 (acyl-thioester intermediate) is an active-site residue. The segment at 202–235 (ALPEQPRDAVQPSSCDDVHAPSTTSRRPPCPLTV) is disordered.

It belongs to the LipB family.

It localises to the cytoplasm. It catalyses the reaction octanoyl-[ACP] + L-lysyl-[protein] = N(6)-octanoyl-L-lysyl-[protein] + holo-[ACP] + H(+). It functions in the pathway protein modification; protein lipoylation via endogenous pathway; protein N(6)-(lipoyl)lysine from octanoyl-[acyl-carrier-protein]: step 1/2. Its function is as follows. Catalyzes the transfer of endogenously produced octanoic acid from octanoyl-acyl-carrier-protein onto the lipoyl domains of lipoate-dependent enzymes. Lipoyl-ACP can also act as a substrate although octanoyl-ACP is likely to be the physiological substrate. The polypeptide is Octanoyltransferase (Geobacter sulfurreducens (strain ATCC 51573 / DSM 12127 / PCA)).